The chain runs to 434 residues: Sensor histidine kinase Hik2 (434 aa).

The 137-residue stretch at 16-152 (ISLCQSQVRL…EAIAKSLAVA (137 aa)) folds into the GAF domain. Cys19 lines the [3Fe-4S] cluster pocket. In terms of domain architecture, Histidine kinase spans 182-432 (DLLHQLRNPL…TFTLWLRSGE (251 aa)). His185 carries the phosphohistidine; by autocatalysis modification. The short motif at 357–361 (DTGYG) is the G1 box element. Residues 386–390 (GTGLG) carry the G2 box motif.

Belongs to the chloroplast sensor kinase protein family. Exists as monomers, tetramers, hexamers and other higher-order oligomers; all are able to autophosphorylate. Upon treatment with 0.5 M NaCl only tetramers are seen, which are probably inactive. Interacts with both RppA and Rre1. The cofactor is [3Fe-4S] cluster. In terms of processing, autophosphorylates, probably on His-185.

The protein resides in the cytoplasm. The catalysed reaction is ATP + protein L-histidine = ADP + protein N-phospho-L-histidine.. With respect to regulation, autophosphorylation is inhibited by Na(+) but not by Cl(-). Reducing agents dithionite, duroquinol and decyl-plastoquinone, but not NADPH or ferredoxin inhibit autophosphorylation. Oxidation of the Fe-S cluster (with potassium ferricyanide) induces a conformational change that is conducive to its autophosphorylation activity. Member of possibly 2 two-component regulatory system(s) Hik2/Rre1 and Hik2/RppA. Transduces PQ (plastoquinone) redox signals to photosystem gene expression machinery during the adjustment of photosystem stoichiometry. Reduced PQ suppresses its autophosphorylation activity (i.e. kinase activity is higher under oxidizing conditions). Member of two-component regulatory system Hik2/Rre1, controls expression of sigB (sll0306), sll0528, slr1119, slr0852 and ssr3188 in response to hyperosmotic stress. Activity responds to high salt (with a linear response as concentrations rise to 0.5 M NaCl); detects Cl(-) levels. Autophosphorylates and transfers phosphate to Rre1. May transfer phosphate to RppA in a possible Hik2/RppA two-component system. This chain is Sensor histidine kinase Hik2, found in Synechocystis sp. (strain ATCC 27184 / PCC 6803 / Kazusa).